We begin with the raw amino-acid sequence, 192 residues long: Holliday junction branch migration complex subunit RuvA (192 aa).

A domain I region spans residues 1-64 (MLGRLTGLLA…EDAQVLFGFL (64 aa)). Positions 65–139 (TAPERETFRM…GKLGADLGPA (75 aa)) are domain II. Residues 139 to 143 (AIGGK) are flexible linker. A domain III region spans residues 144-192 (PASDAQADILQALIALGYSEREAQAAVKALPAEVGVSDGIKLALKALAR).

It belongs to the RuvA family. In terms of assembly, homotetramer. Forms an RuvA(8)-RuvB(12)-Holliday junction (HJ) complex. HJ DNA is sandwiched between 2 RuvA tetramers; dsDNA enters through RuvA and exits via RuvB. An RuvB hexamer assembles on each DNA strand where it exits the tetramer. Each RuvB hexamer is contacted by two RuvA subunits (via domain III) on 2 adjacent RuvB subunits; this complex drives branch migration. In the full resolvosome a probable DNA-RuvA(4)-RuvB(12)-RuvC(2) complex forms which resolves the HJ.

The protein resides in the cytoplasm. Functionally, the RuvA-RuvB-RuvC complex processes Holliday junction (HJ) DNA during genetic recombination and DNA repair, while the RuvA-RuvB complex plays an important role in the rescue of blocked DNA replication forks via replication fork reversal (RFR). RuvA specifically binds to HJ cruciform DNA, conferring on it an open structure. The RuvB hexamer acts as an ATP-dependent pump, pulling dsDNA into and through the RuvAB complex. HJ branch migration allows RuvC to scan DNA until it finds its consensus sequence, where it cleaves and resolves the cruciform DNA. This is Holliday junction branch migration complex subunit RuvA from Methylibium petroleiphilum (strain ATCC BAA-1232 / LMG 22953 / PM1).